The chain runs to 349 residues: MDAIAARALSVVRACVTVTDARVSLDPGVMETLGIAINRYNGLTNHSVSMRPQTQAERNEMFFMCTDMVLAALNVQIGNISPDYDQALATVGALATTEIPYNVQAMNDIVRITGQMQTFGPSKVQTGPYAGAVEVQQSGRYYVPQGRTRGGYINSNIAEVCMDAGAAGQVNALLAPRRGDAVMIYFVWRPLRIFCDPQGASLESAPGTFVTVDGVNVAAGDVVAWNTIAPVNVGNPGARRSILQFEVLWYTSLDRSLDTVPELAPTLTRCYAYVSPTWHALRAVIFQQMNMQPINPPIFPPTERNEIVAYLLVASLADVYAALRPDFRMNGVVAPVGQINRALVLAAYH.

N45 is a glycosylation site (N-linked (GlcNAc...) asparagine; by host).

It belongs to the orbivirus VP7 family. Homotrimer.

The protein resides in the virion. Functionally, major structural core protein; binds to structural protein VP3. Constitutes the surface of the AHSV core. This African horse sickness virus 6 (AHSV-6) protein is Core protein VP7 (Segment-7).